The primary structure comprises 457 residues: tRNA-2-methylthio-N(6)-dimethylallyladenosine synthase (457 aa).

Positions 3 to 120 (KKVYVKTFGC…LPQMIDARRE (118 aa)) constitute an MTTase N-terminal domain. Cys-12, Cys-49, Cys-83, Cys-157, Cys-161, and Cys-164 together coordinate [4Fe-4S] cluster. Residues 143–377 (RVEGPSAFVS…QATIEENVAR (235 aa)) form the Radical SAM core domain. Positions 380–447 (QSMVGKVERI…PHSLRGELVL (68 aa)) constitute a TRAM domain.

It belongs to the methylthiotransferase family. MiaB subfamily. As to quaternary structure, monomer. [4Fe-4S] cluster is required as a cofactor.

It is found in the cytoplasm. The enzyme catalyses N(6)-dimethylallyladenosine(37) in tRNA + (sulfur carrier)-SH + AH2 + 2 S-adenosyl-L-methionine = 2-methylsulfanyl-N(6)-dimethylallyladenosine(37) in tRNA + (sulfur carrier)-H + 5'-deoxyadenosine + L-methionine + A + S-adenosyl-L-homocysteine + 2 H(+). Functionally, catalyzes the methylthiolation of N6-(dimethylallyl)adenosine (i(6)A), leading to the formation of 2-methylthio-N6-(dimethylallyl)adenosine (ms(2)i(6)A) at position 37 in tRNAs that read codons beginning with uridine. The sequence is that of tRNA-2-methylthio-N(6)-dimethylallyladenosine synthase from Burkholderia lata (strain ATCC 17760 / DSM 23089 / LMG 22485 / NCIMB 9086 / R18194 / 383).